The following is a 475-amino-acid chain: Bifunctional protein HldE (475 aa).

Positions 1 to 318 (MIQYSSKFNN…ENAIHHREET (318 aa)) are ribokinase. Residue 195–198 (NMSE) coordinates ATP. The active site involves D264. The interval 344 to 475 (MTNGCFDILH…NVIKKIQASK (132 aa)) is cytidylyltransferase.

This sequence in the N-terminal section; belongs to the carbohydrate kinase PfkB family. The protein in the C-terminal section; belongs to the cytidylyltransferase family. In terms of assembly, homodimer.

The catalysed reaction is D-glycero-beta-D-manno-heptose 7-phosphate + ATP = D-glycero-beta-D-manno-heptose 1,7-bisphosphate + ADP + H(+). It catalyses the reaction D-glycero-beta-D-manno-heptose 1-phosphate + ATP + H(+) = ADP-D-glycero-beta-D-manno-heptose + diphosphate. It participates in nucleotide-sugar biosynthesis; ADP-L-glycero-beta-D-manno-heptose biosynthesis; ADP-L-glycero-beta-D-manno-heptose from D-glycero-beta-D-manno-heptose 7-phosphate: step 1/4. Its pathway is nucleotide-sugar biosynthesis; ADP-L-glycero-beta-D-manno-heptose biosynthesis; ADP-L-glycero-beta-D-manno-heptose from D-glycero-beta-D-manno-heptose 7-phosphate: step 3/4. It functions in the pathway bacterial outer membrane biogenesis; LPS core biosynthesis. In terms of biological role, catalyzes the phosphorylation of D-glycero-D-manno-heptose 7-phosphate at the C-1 position to selectively form D-glycero-beta-D-manno-heptose-1,7-bisphosphate. Functionally, catalyzes the ADP transfer from ATP to D-glycero-beta-D-manno-heptose 1-phosphate, yielding ADP-D-glycero-beta-D-manno-heptose. The protein is Bifunctional protein HldE (hldE) of Actinobacillus pleuropneumoniae (Haemophilus pleuropneumoniae).